The following is a 340-amino-acid chain: DNA-directed RNA polymerase subunit alpha (340 aa).

The segment at 1 to 233 (MIQDEIPIPV…DLFIIFLNME (233 aa)) is alpha N-terminal domain (alpha-NTD). The alpha C-terminal domain (alpha-CTD) stretch occupies residues 264 to 340 (AKEVAFKQIF…QLPKDQFNIS (77 aa)).

Belongs to the RNA polymerase alpha chain family. As to quaternary structure, in plastids the minimal PEP RNA polymerase catalytic core is composed of four subunits: alpha, beta, beta', and beta''. When a (nuclear-encoded) sigma factor is associated with the core the holoenzyme is formed, which can initiate transcription.

The protein localises to the plastid. It localises to the chloroplast. It catalyses the reaction RNA(n) + a ribonucleoside 5'-triphosphate = RNA(n+1) + diphosphate. DNA-dependent RNA polymerase catalyzes the transcription of DNA into RNA using the four ribonucleoside triphosphates as substrates. This Psilotum nudum (Whisk fern) protein is DNA-directed RNA polymerase subunit alpha.